The sequence spans 349 residues: Cell adhesion molecule CEACAM8 (349 aa).

Residues 1 to 34 (MGPISAPSCRWRIPWQGLLLTASLFTFWNPPTTA) form the signal peptide. An Ig-like V-type domain is found at 35-142 (QLTIEAVPSN…EVTGQFSVHP (108 aa)). Residues Asn-104, Asn-111, Asn-115, Asn-152, Asn-173, Asn-197, Asn-224, Asn-256, Asn-274, Asn-288, and Asn-309 are each glycosylated (N-linked (GlcNAc...) asparagine). 2 Ig-like C2-type domains span residues 145-232 (PKPS…VTLN) and 237-319 (PDAP…ITVS). A disulfide bond links Cys-167 and Cys-215. Cys-259 and Cys-299 form a disulfide bridge. Asp-320 carries GPI-anchor amidated aspartate lipidation. A propeptide spans 321–349 (ALVQGSSPGLSARATVSIMIGVLARVALI) (removed in mature form).

It belongs to the immunoglobulin superfamily. CEA family. As to quaternary structure, monomer. Heterodimer with CEACAM6; heterodimerizes via its Ig-like V-type domain. Post-translationally, glycosylated. As to expression, expressed in leukocytes of chronic myeloid Leukemia patients and bone marrow.

The protein resides in the cell membrane. It is found in the cell surface. Its function is as follows. Cell surface glycoprotein that plays a role in cell adhesion in a calcium-independent manner. Mediates heterophilic cell adhesion with other carcinoembryonic antigen-related cell adhesion molecules, such as CEACAM6. Heterophilic interaction with CEACAM8 occurs in activated neutrophils. The chain is Cell adhesion molecule CEACAM8 from Homo sapiens (Human).